We begin with the raw amino-acid sequence, 156 residues long: Small ribosomal subunit protein uS7 (156 aa).

It belongs to the universal ribosomal protein uS7 family. Part of the 30S ribosomal subunit. Contacts proteins S9 and S11.

One of the primary rRNA binding proteins, it binds directly to 16S rRNA where it nucleates assembly of the head domain of the 30S subunit. Is located at the subunit interface close to the decoding center, probably blocks exit of the E-site tRNA. The chain is Small ribosomal subunit protein uS7 from Mycobacteroides abscessus (strain ATCC 19977 / DSM 44196 / CCUG 20993 / CIP 104536 / JCM 13569 / NCTC 13031 / TMC 1543 / L948) (Mycobacterium abscessus).